The primary structure comprises 449 residues: MGKKYFGTDGVRGQTNSFPMTAENALRLGMAAGRYFVRHTGRHSVVIGKDTRLSGYMIESALVAGFTSVGMDVFQFGPLPTPAVALMTRSLRADLGVMITASHNPYHDNGMKLFGPDGRKLDDKAELEIEALMDGSLVDGLAAPSDLGRAKRVDDAQARYVEIVKSSFPRAQRLSNLRLVVDCANGAGYKVAPAALWELGADVIPIGVEPNGFNVNEECGSTAPARLSKEVIKYRADLGIALDGDGDRVVLCDEKGRVIDGDQILGLLAGHWQDIGELRHPAIVSTVMSNLGLEQYLAGRGIALERTRVGDRYVSERMRETGINLGGEASGHIVMPDYSPTGDGLIAALQVLRVLGDSGKRASELLKVFKPAPQLLENVRVPRGRKPLESEAVKAAIAEAEVRMGVAGRLVVRASGTEPVVRVMAEGEQKLIRSVVDDVRGAIETVAQG.

Ser-102 acts as the Phosphoserine intermediate in catalysis. Mg(2+)-binding residues include Ser-102, Asp-243, Asp-245, and Asp-247. Ser-102 carries the post-translational modification Phosphoserine.

The protein belongs to the phosphohexose mutase family. Mg(2+) serves as cofactor. Post-translationally, activated by phosphorylation.

The catalysed reaction is alpha-D-glucosamine 1-phosphate = D-glucosamine 6-phosphate. In terms of biological role, catalyzes the conversion of glucosamine-6-phosphate to glucosamine-1-phosphate. In Maricaulis maris (strain MCS10) (Caulobacter maris), this protein is Phosphoglucosamine mutase.